A 24-amino-acid polypeptide reads, in one-letter code: Brevinin-1Sb (24 aa).

The cysteines at positions 18 and 24 are disulfide-linked.

As to expression, expressed by the skin glands.

It localises to the secreted. Functionally, antibacterial activity against Gram-negative bacterium E.coli. In Lithobates sphenocephalus (Southern leopard frog), this protein is Brevinin-1Sb.